The sequence spans 246 residues: Probable maleylacetoacetate isomerase 1 (246 aa).

The region spanning 32 to 116 is the GST N-terminal domain; that stretch reads TKPILYSYWP…YLEETRPQPA (85 aa). Glutathione-binding positions include 42 to 47, Val-88, 100 to 101, Gln-140, and 144 to 146; these read SSCSWR, DS, and NVS. The region spanning 121-241 is the GST C-terminal domain; it reads DPVKRAKIRE…HPSTQPDCPP (121 aa).

This sequence belongs to the GST superfamily. Zeta family. Glutathione is required as a cofactor.

The protein localises to the cytoplasm. The catalysed reaction is 4-maleylacetoacetate = 4-fumarylacetoacetate. It carries out the reaction RX + glutathione = an S-substituted glutathione + a halide anion + H(+). It functions in the pathway amino-acid degradation; L-phenylalanine degradation; acetoacetate and fumarate from L-phenylalanine: step 5/6. Catalyzes the glutathione dependent oxygenation of dichloroacetic acid to glyoxylic acid in vitro. Possesses low glutathione thioltransferase activity toward 4-hydroxynonenal (4-HNE). Has no glutathione thioltransferase activity with adrenochrome, phenethyl isothiocyanate (PEITC), 5-hydroperoxyeicosatetraenoic acid ((5S)-HpETE), prostaglandin A2 (PGA2) or 2-hydroxyethyldisulfide (HED). This chain is Probable maleylacetoacetate isomerase 1 (GstZ1), found in Drosophila melanogaster (Fruit fly).